The following is a 100-amino-acid chain: Small ribosomal subunit protein uS14c (100 aa).

This sequence belongs to the universal ribosomal protein uS14 family. Part of the 30S ribosomal subunit.

The protein resides in the plastid. Its function is as follows. Binds 16S rRNA, required for the assembly of 30S particles. The sequence is that of Small ribosomal subunit protein uS14c from Cuscuta exaltata (Tall dodder).